The sequence spans 216 residues: Large ribosomal subunit protein uL3 (216 aa).

Positions 137-158 (GASHGAHKNHRKPGSIGGASTP) are disordered.

Belongs to the universal ribosomal protein uL3 family. As to quaternary structure, part of the 50S ribosomal subunit. Forms a cluster with proteins L14 and L19.

In terms of biological role, one of the primary rRNA binding proteins, it binds directly near the 3'-end of the 23S rRNA, where it nucleates assembly of the 50S subunit. The sequence is that of Large ribosomal subunit protein uL3 from Arthrobacter sp. (strain FB24).